The primary structure comprises 542 residues: Putative inactive cadmium/zinc-transporting ATPase HMA3 (542 aa).

The Cytoplasmic segment spans residues 1-89 (MAEGEESKKM…VRPYGETSLK (89 aa)). Residues 13–79 (QTSYFDVVGI…ALNQARLEAS (67 aa)) form the HMA domain. A helical membrane pass occupies residues 90 to 111 (SQWPSPFAIVSGVLLVLSFFKY). Residues 112-114 (FYS) are Extracellular-facing. The helical transmembrane segment at 115–134 (PLEWLAIVAVVAGVFPILAK) threads the bilayer. Residues 135–141 (AVASVTR) are Cytoplasmic-facing. A helical membrane pass occupies residues 142–162 (FRLDINALTLIAVIATLCMQD). Position 163 (Phe163) is a topological domain, extracellular. The helical transmembrane segment at 164–184 (TEAATIVFLFSVADWLESSAA) threads the bilayer. Residues 185-310 (HKASIVMSSL…QTKTQRFIDK (126 aa)) lie on the Cytoplasmic side of the membrane. Residues 311–333 (CSRYYTPAVVVSAACFAVIPVLL) traverse the membrane as a helical segment. The Extracellular segment spans residues 334–341 (KVQDLSHW). Residues 342 to 359 (FHLALVVLVSGCPCGLIL) form a helical membrane-spanning segment. Residues 360-542 (STPVATFCAL…VAQALKELKS (183 aa)) lie on the Cytoplasmic side of the membrane.

This sequence belongs to the cation transport ATPase (P-type) (TC 3.A.3) family. Type IB subfamily.

The protein resides in the membrane. This chain is Putative inactive cadmium/zinc-transporting ATPase HMA3 (HMA3), found in Arabidopsis thaliana (Mouse-ear cress).